Here is a 682-residue protein sequence, read N- to C-terminus: Heat shock 70 kDa protein, mitochondrial (682 aa).

Residues 1 to 57 (MATAALLRSLRRREFATSSISAYRTLASNTKPSWCPSLVGAKWAGLARPFSSKPAGN) constitute a mitochondrion transit peptide. Residues 649–682 (GEHMAGGSSGGASGGGGAQGGDQPPEAEYEEVKK) form a disordered region. Residues 655-668 (GSSGGASGGGGAQG) are compositionally biased toward gly residues. The span at 673 to 682 (PEAEYEEVKK) shows a compositional bias: acidic residues.

This sequence belongs to the heat shock protein 70 family.

It localises to the mitochondrion. This chain is Heat shock 70 kDa protein, mitochondrial (HSP68), found in Solanum tuberosum (Potato).